Here is a 304-residue protein sequence, read N- to C-terminus: MSGRDFGYVIQSSAALWNRLSTFSQRGKALDTRLADIKKALGKPYYETSDVLLYHGDSLELLKSMPQQIFDLTVTSPPYNIGKEYEGVLSIEEYISWCETWMSRVHRATSAGGAFWLNVGYVPVPNQGKAVPIPYLLWDKSPFYMIQEVVWNYGAGVASRKSFSPRNEKFLWYVRDPLNYYFDLDSVRDPNVKYPNQKKNGKLKCNPLGKNPTDVWQFPKVTSGAKRSSVERTAHPAQFPSAVIERVIKACSPSDGVILDPFLGSGTTSLTARKQGRCSVGIEIREDYLDIAVGRLEAEAQSLF.

It belongs to the N(4)/N(6)-methyltransferase family. N(4) subfamily.

It carries out the reaction a 2'-deoxycytidine in DNA + S-adenosyl-L-methionine = an N(4)-methyl-2'-deoxycytidine in DNA + S-adenosyl-L-homocysteine + H(+). A methylase that recognizes the double-stranded sequence 5'-AGTACT-3', methylates C-5 on both strands, and protects the DNA from cleavage by the ScaI endonuclease. The chain is Type II methyltransferase M.ScaI from Streptomyces caespitosus.